The primary structure comprises 249 residues: Tetraspanin-18 (249 aa).

Residues 1 to 13 (MEGDCLSCMKYLM) are Cytoplasmic-facing. The chain crosses the membrane as a helical span at residues 14–34 (FVFNFFIFLGGACLLGIGIWV). Residues 35-49 (MVDPTGFREIVAANP) lie on the Extracellular side of the membrane. The helical transmembrane segment at 50-70 (LLITGAYILLAMGGLLFLLGF) threads the bilayer. Topologically, residues 71-83 (LGCCGAVRENKCL) are cytoplasmic. The helical transmembrane segment at 84–104 (LLFFFLFILIIFLAELSAAIL) threads the bilayer. Topologically, residues 105–223 (AFIFRGNLTR…AFETYVYLAG (119 aa)) are extracellular. N-linked (GlcNAc...) asparagine glycans are attached at residues asparagine 111 and asparagine 129. Residues 224–244 (ALAIGVLAIELFAMIFAMCLF) form a helical membrane-spanning segment. At 245–249 (RGIIQ) the chain is on the cytoplasmic side.

It belongs to the tetraspanin (TM4SF) family. As to quaternary structure, interacts with ORAI1; this interaction regulates ORAI1 exit from the endoplasmic (ER), and/or Golgi, and trafficking to the cell surface.

It localises to the membrane. Its function is as follows. Plays a role in the cell surface localization of ORAI1 and may participate in the regulation of Ca(2+) signaling and the VWF release in response to inflammatory stimuli. The polypeptide is Tetraspanin-18 (Bos taurus (Bovine)).